Reading from the N-terminus, the 286-residue chain is Transcription factor egl-46 (286 aa).

A C2H2-type 1; atypical zinc finger spans residues 180 to 200 (CICRLCKVKYEDVFKLAQHKC). C2H2-type zinc fingers lie at residues 208–230 (YKCP…RRWH) and 248–271 (VSCS…STCQ).

The protein belongs to the INSM1 family. Interacts (via C-terminus) with egl-44 (via N-terminus); the interaction is direct; the interaction may regulate transcription. As to expression, expressed in touch cells, HSN cells, ventral cord motor neurons and ciliated ray neurons.

It localises to the nucleus. Functionally, transcription factor. Represses expression of genes involved in differentiation of touch receptor neurons (TRN), probably acting as a heterodimer with egl-44, perhaps by occupying similar cis-regulatory elements as an unc-86/mec-3 heterodimer. Plays a role in cell fate specification of neurons, including the hook neuron HOB, the gas-sensing neuron BAG and touch receptor neurons. Plays a role in neuron differentiation by repressing the expression of zag-1 in FLP neurons, probably acting as a heterodimer with egl-44; because zag-1 represses expression of egl-46 and egl-44, together these proteins form a bistable, negative-feedback loop that regulates the choice between neuronal fates. Acts downstream of egl-44 to prevent touch cell differentiation in FLP neurons. Involved in male mating behavior, acting in concert with egl-44, via modulation of expression of polycystins lov-1 and pkd-2, homeodomain protein ceh-26, and neuropeptide-like protein nlp-8. Modulates the expression of a subset of terminal differentiation genes involved in O(2)- and CO(2)-sensing, acting in parallel to ets-5 and egl-13. May act upstream of RFX transcription factor daf-19 to regulate gene expression specifically in the HOB neuron. Plays a role in specifying commissural dendrites of the PVD nociceptive neurons, acting in concert with egl-44. In association with egl-44, regulates cell cycle exit in the neuronal Q cell lineage. This Caenorhabditis elegans protein is Transcription factor egl-46.